The following is a 676-amino-acid chain: Kojibiose hydrolase (676 aa).

Residues methionine 1–alanine 20 form the signal peptide. Glutamate 469 functions as the Proton donor in the catalytic mechanism. Residue glutamate 613 is the Proton acceptor of the active site.

Belongs to the glycosyl hydrolase 65 family.

It carries out the reaction kojibiose + H2O = beta-D-glucose + D-glucose. Glycosidase that specifically hydrolyzes kojibiose to beta-glucose and glucose. Besides its activity on kojibiose, is also able to act on alpha-1,2-oligoglucans with a higher degree of polymerization. Shows weak activity on nigerose, but is not capable of breaking down trehalose, maltose, isomaltose, sucrose, isomaltulose, turanose or melezitose. The protein is Kojibiose hydrolase of Mucilaginibacter mallensis.